A 367-amino-acid chain; its full sequence is uncharacterized protein (367 aa).

The protein belongs to the Gfo/Idh/MocA family.

This is an uncharacterized protein from Streptococcus pneumoniae serotype 4 (strain ATCC BAA-334 / TIGR4).